Reading from the N-terminus, the 105-residue chain is Urease subunit beta (105 aa).

The protein belongs to the urease beta subunit family. As to quaternary structure, heterotrimer of UreA (gamma), UreB (beta) and UreC (alpha) subunits. Three heterotrimers associate to form the active enzyme.

The protein localises to the cytoplasm. It carries out the reaction urea + 2 H2O + H(+) = hydrogencarbonate + 2 NH4(+). It functions in the pathway nitrogen metabolism; urea degradation; CO(2) and NH(3) from urea (urease route): step 1/1. This chain is Urease subunit beta, found in Mycobacterium sp. (strain JLS).